Consider the following 493-residue polypeptide: Ribose import ATP-binding protein RbsA (493 aa).

ABC transporter domains follow at residues Leu5–Arg241 and Glu252–Ile491. Gly37 to Ser44 is an ATP binding site.

This sequence belongs to the ABC transporter superfamily. Ribose importer (TC 3.A.1.2.1) family. The complex is composed of an ATP-binding protein (RbsA), two transmembrane proteins (RbsC) and a solute-binding protein (RbsB).

It localises to the cell inner membrane. The catalysed reaction is D-ribose(out) + ATP + H2O = D-ribose(in) + ADP + phosphate + H(+). Part of the ABC transporter complex RbsABC involved in ribose import. Responsible for energy coupling to the transport system. The polypeptide is Ribose import ATP-binding protein RbsA (Haemophilus influenzae (strain 86-028NP)).